We begin with the raw amino-acid sequence, 298 residues long: Putative S-adenosyl-L-methionine-dependent methyltransferase MAV_0778 (298 aa).

Residues aspartate 124 and 153–154 (DL) contribute to the S-adenosyl-L-methionine site.

This sequence belongs to the UPF0677 family.

Its function is as follows. Exhibits S-adenosyl-L-methionine-dependent methyltransferase activity. This is Putative S-adenosyl-L-methionine-dependent methyltransferase MAV_0778 from Mycobacterium avium (strain 104).